The sequence spans 252 residues: MERLLIVNADDFGLSKGQNYGIIEACRNGIVTSTTALVNGQAIDHAVQLSRDEPSLAIGMHFVLTMGKPLTAMPGLTRDGVLGKWIWQLAEEGALPLEEITQELASQYLRFIELFGRKPTHLDSHHHVHMFPQIFPIVAKFAAEEGIALRIDRQPLSNDGDLPANLRSSQGFSSAFYGEEISETLFLQVLDDSSHRGERSLEVMCHPAFVDNTIRQSAYCFPRLTELDVLTSASLKYAIAERGYLLGSYHDV.

The Mg(2+) site is built by H61 and H125.

Belongs to the YdjC deacetylase family. ChbG subfamily. Homodimer. Mg(2+) is required as a cofactor.

The protein localises to the cytoplasm. The enzyme catalyses N,N'-diacetylchitobiose + H2O = N-acetyl-beta-D-glucosaminyl-(1-&gt;4)-D-glucosamine + acetate. The catalysed reaction is diacetylchitobiose-6'-phosphate + H2O = N'-monoacetylchitobiose-6'-phosphate + acetate. The protein operates within glycan degradation; chitin degradation. Functionally, involved in the degradation of chitin. ChbG is essential for growth on the acetylated chitooligosaccharides chitobiose and chitotriose but is dispensable for growth on cellobiose and chitosan dimer, the deacetylated form of chitobiose. Deacetylation of chitobiose-6-P and chitotriose-6-P is necessary for both the activation of the chb promoter by the regulatory protein ChbR and the hydrolysis of phosphorylated beta-glucosides by the phospho-beta-glucosidase ChbF. Catalyzes the removal of only one acetyl group from chitobiose-6-P to yield monoacetylchitobiose-6-P, the inducer of ChbR and the substrate of ChbF. The polypeptide is Chitooligosaccharide deacetylase (Escherichia coli O45:K1 (strain S88 / ExPEC)).